We begin with the raw amino-acid sequence, 90 residues long: Chromosomal protein MC1c (90 aa).

In terms of biological role, protects DNA against thermal denaturation and modulates transcription. The sequence is that of Chromosomal protein MC1c from Methanothrix soehngenii (Methanosaeta concilii).